The chain runs to 272 residues: R-spondin-3 (272 aa).

An N-terminal signal peptide occupies residues 1–21 (MHLRLISWLFIILNFMEYIGS). 2 FU repeats span residues 35-86 (PNVS…GYYG) and 92-135 (INKC…GLEA). N-linked (GlcNAc...) asparagine glycosylation is present at N36. Cystine bridges form between C41–C48, C45–C54, C57–C76, C80–C95, C98–C105, C102–C111, C114–C125, C129–C142, C148–C190, C159–C166, and C199–C206. Residues 147-207 (HCEVSEWNPW…KCTVQRKKCQ (61 aa)) enclose the TSP type-1 domain. Positions 201–272 (VQRKKCQKGE…QKSVSVSTVH (72 aa)) are disordered. The segment covering 213 to 223 (KKGRERKRKKP) has biased composition (basic residues). Over residues 224-252 (NKGESKEAIPDSKSLESSKEIPEQRENKQ) the composition is skewed to basic and acidic residues.

This sequence belongs to the R-spondin family. Interacts with the extracellular domain of FZD8 and LRP6. It however does not form a ternary complex with FZD8 and LRP6. Interacts with WNT1. Binds heparin. Interacts with LGR4, LGR5 and LGR6. Ubiquitously expressed. Expressed at higher level in placenta, small intestine, fetal thymus and lymph node. Highly expressed in endothelial cells.

It is found in the secreted. Functionally, activator of the canonical Wnt signaling pathway by acting as a ligand for LGR4-6 receptors, which acts as a key regulator of angiogenesis. Upon binding to LGR4-6 (LGR4, LGR5 or LGR6), LGR4-6 associate with phosphorylated LRP6 and frizzled receptors that are activated by extracellular Wnt receptors, triggering the canonical Wnt signaling pathway to increase expression of target genes. Also regulates the canonical Wnt/beta-catenin-dependent pathway and non-canonical Wnt signaling by acting as an inhibitor of ZNRF3, an important regulator of the Wnt signaling pathway. Acts as a ligand for frizzled FZD8 and LRP6. May negatively regulate the TGF-beta pathway. Acts as a key regulator of angiogenesis by controlling vascular stability and pruning: acts by activating the non-canonical Wnt signaling pathway in endothelial cells. Can also amplify Wnt signaling pathway independently of LGR4-6 receptors, possibly by acting as a direct antagonistic ligand to RNF43 and ZNRF3. In Homo sapiens (Human), this protein is R-spondin-3 (RSPO3).